Reading from the N-terminus, the 650-residue chain is Macrolide export ATP-binding/permease protein MacB (650 aa).

Residues 2-238 (IDIKGIRKSY…PTTAQEKRQE (237 aa)) enclose the ABC transporter domain. An ATP-binding site is contributed by 38-45 (GPSGSGKS). A run of 4 helical transmembrane segments spans residues 267–287 (GLSMLGILIGVAAVVGMLALG), 531–551 (IAAISLVVGGIGIMNIMLVSV), 580–600 (IVVSVCGGLLGIALGVGFSLL), and 610–630 (VVSAGSVILSFGFSALIGIVF).

The protein belongs to the ABC transporter superfamily. Macrolide exporter (TC 3.A.1.122) family. In terms of assembly, homodimer.

It localises to the cell inner membrane. In terms of biological role, non-canonical ABC transporter that contains transmembrane domains (TMD), which form a pore in the inner membrane, and an ATP-binding domain (NBD), which is responsible for energy generation. Confers resistance against macrolides. The protein is Macrolide export ATP-binding/permease protein MacB of Bdellovibrio bacteriovorus (strain ATCC 15356 / DSM 50701 / NCIMB 9529 / HD100).